We begin with the raw amino-acid sequence, 218 residues long: Small ribosomal subunit protein uS3c (218 aa).

The KH type-2 domain maps to 47–118 (VQKNIRISSG…KLNIAITRIS (72 aa)).

This sequence belongs to the universal ribosomal protein uS3 family. Part of the 30S ribosomal subunit.

It localises to the plastid. The protein resides in the chloroplast. The sequence is that of Small ribosomal subunit protein uS3c (rps3) from Nasturtium officinale (Watercress).